A 920-amino-acid polypeptide reads, in one-letter code: Zinc finger MIZ domain-containing protein 2 (920 aa).

Disordered regions lie at residues 1–22 and 54–79; these read MNSM…GSFA and SQVL…VAGG. Low complexity predominate over residues 60 to 79; sequence PMGPAGSPSGSSMMPGVAGG. Position 111 is an omega-N-methylarginine (Arg111). Disordered regions lie at residues 243–265 and 286–391; these read GQRL…RQGV and PSTA…SPNQ. Asymmetric dimethylarginine occurs at positions 245 and 262. The span at 295–304 shows a compositional bias: pro residues; sequence PGQPPAPSPS. Polar residues predominate over residues 334-354; sequence EQFNGQGASFNGGSVSYSQPG. Over residues 366–379 the composition is skewed to pro residues; it reads PSSPLPGNPTPPMT. Low complexity predominate over residues 380 to 389; sequence PSSSVPYMSP. Glycyl lysine isopeptide (Lys-Gly) (interchain with G-Cter in SUMO2) cross-links involve residues Lys402 and Lys457. Residues 435–506 are interaction with AR; the sequence is PFRLQHNLAV…TIERGDNKTS (72 aa). The SP-RING-type zinc-finger motif lies at 585-671; sequence GEDGVEQTAI…IYIQNSDYEE (87 aa). Cys616, His618, Cys639, and Cys642 together coordinate Zn(2+). Lys692 participates in a covalent cross-link: Glycyl lysine isopeptide (Lys-Gly) (interchain with G-Cter in SUMO2). Residues 803-920 form a disordered region; that stretch reads SQMAPAGHLD…DDLLSLFENN (118 aa). Residues 876–890 are compositionally biased toward low complexity; it reads AGEAPEPALDLLPEL. Positions 906-920 are enriched in polar residues; it reads PTNNNDDLLSLFENN.

Interacts with AR, SMARCA4/BRG1 and SMARCE1/BAF57. Interaction with either SMARCA4 and SMARCE1 enhances AR-mediated transcription. In terms of tissue distribution, expressed most abundantly in testis with lower levels in heart, brain, pancreas, prostate and ovary.

It localises to the nucleus. In terms of biological role, increases ligand-dependent transcriptional activity of AR and other nuclear hormone receptors. The sequence is that of Zinc finger MIZ domain-containing protein 2 (ZMIZ2) from Homo sapiens (Human).